The sequence spans 208 residues: Small ribosomal subunit protein uS2 (208 aa).

It belongs to the universal ribosomal protein uS2 family.

This chain is Small ribosomal subunit protein uS2, found in Cenarchaeum symbiosum (strain A).